The chain runs to 127 residues: Protein ApaG (127 aa).

The ApaG domain occupies 3–127 (NNPSSKIEVA…FVLSVPRTLH (125 aa)).

The chain is Protein ApaG from Xylella fastidiosa (strain M23).